Reading from the N-terminus, the 333-residue chain is Phosphoribosylformylglycinamidine cyclo-ligase (333 aa).

Belongs to the AIR synthase family.

Its subcellular location is the cytoplasm. The catalysed reaction is 2-formamido-N(1)-(5-O-phospho-beta-D-ribosyl)acetamidine + ATP = 5-amino-1-(5-phospho-beta-D-ribosyl)imidazole + ADP + phosphate + H(+). It functions in the pathway purine metabolism; IMP biosynthesis via de novo pathway; 5-amino-1-(5-phospho-D-ribosyl)imidazole from N(2)-formyl-N(1)-(5-phospho-D-ribosyl)glycinamide: step 2/2. The chain is Phosphoribosylformylglycinamidine cyclo-ligase from Clostridium perfringens (strain 13 / Type A).